A 65-amino-acid chain; its full sequence is Large ribosomal subunit protein bL35 (65 aa).

The segment at 1-51 (MPKIKTNRGAAKRFRKSASGRVKRGNAFTSHILTHKTRKNKRNLRGTSMVS) is disordered. 2 stretches are compositionally biased toward basic residues: residues 10-24 (AAKR…RVKR) and 33-44 (LTHKTRKNKRNL).

It belongs to the bacterial ribosomal protein bL35 family.

In Pelobacter propionicus (strain DSM 2379 / NBRC 103807 / OttBd1), this protein is Large ribosomal subunit protein bL35.